Here is a 304-residue protein sequence, read N- to C-terminus: UDP-3-O-acyl-N-acetylglucosamine deacetylase (304 aa).

3 residues coordinate Zn(2+): His-79, His-238, and Asp-242. His-265 serves as the catalytic Proton donor.

It belongs to the LpxC family. Zn(2+) serves as cofactor.

It catalyses the reaction a UDP-3-O-[(3R)-3-hydroxyacyl]-N-acetyl-alpha-D-glucosamine + H2O = a UDP-3-O-[(3R)-3-hydroxyacyl]-alpha-D-glucosamine + acetate. The protein operates within glycolipid biosynthesis; lipid IV(A) biosynthesis; lipid IV(A) from (3R)-3-hydroxytetradecanoyl-[acyl-carrier-protein] and UDP-N-acetyl-alpha-D-glucosamine: step 2/6. Its function is as follows. Catalyzes the hydrolysis of UDP-3-O-myristoyl-N-acetylglucosamine to form UDP-3-O-myristoylglucosamine and acetate, the committed step in lipid A biosynthesis. The protein is UDP-3-O-acyl-N-acetylglucosamine deacetylase of Laribacter hongkongensis (strain HLHK9).